The primary structure comprises 448 residues: MPDLQELWNYLQEKFQTDLTTVGFNAWIKTAKPLAFRANELLIEVPSVLHKEYWENNLATKVVEGAYEFAEIELTPIFVLPGESDNLTPLEPEEEHVLTKAETPTFLRETHLNSKYTFDTFVTGKGNQMAHAAALVVSEEPGVLYNPLFLYGGVGLGKTHLMQAIGHQLLESKPETNVKYVTSEAFANDFINSIQTKNQEKFRQEYRNVDLLLVDDIQFFADKEGTQEEFFHTFNDLYNDKKQIVLTSDRLPNEIPKLQERLVSRFKWGLPVDITPPDLETRIAILRNKADAEHLEIPEDTLSYIAGQIDSNVRELEGALVRVQAYATMQNAEITTSLAADALKGLKLNGKSSQLSIAKIQSVVAKYYSLTVADLKGRKRVKEIVLPRQIAMYLAREMTDSSLPKIGQEFGGKDHTTVMHAHERISQSLTTDQNLKDAILDLKNTMKS.

The tract at residues 1–72 (MPDLQELWNY…VEGAYEFAEI (72 aa)) is domain I, interacts with DnaA modulators. The segment at 72-110 (IELTPIFVLPGESDNLTPLEPEEEHVLTKAETPTFLRET) is domain II. Residues 111-327 (HLNSKYTFDT…GALVRVQAYA (217 aa)) form a domain III, AAA+ region region. ATP contacts are provided by G155, G157, K158, and T159. Positions 328–448 (TMQNAEITTS…ILDLKNTMKS (121 aa)) are domain IV, binds dsDNA.

It belongs to the DnaA family. In terms of assembly, oligomerizes as a right-handed, spiral filament on DNA at oriC.

Its subcellular location is the cytoplasm. Functionally, plays an essential role in the initiation and regulation of chromosomal replication. ATP-DnaA binds to the origin of replication (oriC) to initiate formation of the DNA replication initiation complex once per cell cycle. Binds the DnaA box (a 9 base pair repeat at the origin) and separates the double-stranded (ds)DNA. Forms a right-handed helical filament on oriC DNA; dsDNA binds to the exterior of the filament while single-stranded (ss)DNA is stabiized in the filament's interior. The ATP-DnaA-oriC complex binds and stabilizes one strand of the AT-rich DNA unwinding element (DUE), permitting loading of DNA polymerase. After initiation quickly degrades to an ADP-DnaA complex that is not apt for DNA replication. Binds acidic phospholipids. In Latilactobacillus sakei subsp. sakei (strain 23K) (Lactobacillus sakei subsp. sakei), this protein is Chromosomal replication initiator protein DnaA.